Consider the following 220-residue polypeptide: Thiopurine S-methyltransferase (220 aa).

S-adenosyl-L-methionine is bound by residues tryptophan 14, leucine 49, glutamate 70, and arginine 127.

It belongs to the class I-like SAM-binding methyltransferase superfamily. TPMT family.

It localises to the cytoplasm. It catalyses the reaction S-adenosyl-L-methionine + a thiopurine = S-adenosyl-L-homocysteine + a thiopurine S-methylether.. In Gluconobacter oxydans (strain 621H) (Gluconobacter suboxydans), this protein is Thiopurine S-methyltransferase.